Here is a 313-residue protein sequence, read N- to C-terminus: uncharacterized protein (313 aa).

The next 6 helical transmembrane spans lie at 16-36 (AGTWVMIGILGLTMVGFAFLA), 106-126 (FTILTGLFTIIIAAGIVANEF), 155-175 (FGLLLLLILFIGSTLLGLIFF), 208-228 (LSESVSALMVATMAFMLSAVF), 233-253 (LAVGFSIFLLVAGTTATAFIA), and 286-306 (FSLVMLAIYFIIFLLLAFGIF).

Its subcellular location is the cell membrane. This is an uncharacterized protein from Bacillus subtilis (strain 168).